Reading from the N-terminus, the 77-residue chain is Defensin-B6 (77 aa).

The N-terminal stretch at 1-20 is a signal peptide; it reads MKTLFFLSVFIFLLLHLSPG. 3 cysteine pairs are disulfide-bonded: Cys-43/Cys-70, Cys-50/Cys-64, and Cys-54/Cys-71.

This sequence belongs to the beta-defensin family. Lowly expressed in spleen, kidney and lung.

It localises to the secreted. Functionally, has antimicrobial activity. The protein is Defensin-B6 of Ornithorhynchus anatinus (Duckbill platypus).